The sequence spans 433 residues: 23S rRNA (uracil(1939)-C(5))-methyltransferase RlmD (433 aa).

One can recognise a TRAM domain in the interval 10-68 (RTTTRQIITVSVNDLDSFGQGVARHNGKTLFIPGLLPQENAEVTVTEDKKQYARAKVVR). Positions 81, 87, 90, and 162 each coordinate [4Fe-4S] cluster. Residues Gln265, Phe294, Asn299, Glu315, Asn342, and Asp363 each coordinate S-adenosyl-L-methionine. The active-site Nucleophile is Cys389.

This sequence belongs to the class I-like SAM-binding methyltransferase superfamily. RNA M5U methyltransferase family. RlmD subfamily.

The enzyme catalyses uridine(1939) in 23S rRNA + S-adenosyl-L-methionine = 5-methyluridine(1939) in 23S rRNA + S-adenosyl-L-homocysteine + H(+). Functionally, catalyzes the formation of 5-methyl-uridine at position 1939 (m5U1939) in 23S rRNA. In Shigella boydii serotype 4 (strain Sb227), this protein is 23S rRNA (uracil(1939)-C(5))-methyltransferase RlmD.